The sequence spans 345 residues: D-alanine--D-alanine ligase (345 aa).

Residues 133-332 form the ATP-grasp domain; the sequence is KWLCHARGVK…LPHTKRAKVT (200 aa). ATP is bound at residue 160–211; sequence AYPIIVKPSRLGSSIGVSIVKDESKLDYALDSAFEFDNTVIVEPFLEGVKEY. Mg(2+) contacts are provided by aspartate 284, glutamate 296, and asparagine 298.

Belongs to the D-alanine--D-alanine ligase family. Mg(2+) serves as cofactor. Mn(2+) is required as a cofactor.

Its subcellular location is the cytoplasm. The catalysed reaction is 2 D-alanine + ATP = D-alanyl-D-alanine + ADP + phosphate + H(+). The protein operates within cell wall biogenesis; peptidoglycan biosynthesis. Cell wall formation. The polypeptide is D-alanine--D-alanine ligase (Sulfurimonas denitrificans (strain ATCC 33889 / DSM 1251) (Thiomicrospira denitrificans (strain ATCC 33889 / DSM 1251))).